The following is a 223-amino-acid chain: Small ribosomal subunit protein uS3 (223 aa).

The 79-residue stretch at 39–117 (IREHLRKKPS…RPELNAKLVA (79 aa)) folds into the KH type-2 domain.

Belongs to the universal ribosomal protein uS3 family. In terms of assembly, part of the 30S ribosomal subunit. Forms a tight complex with proteins S10 and S14.

Binds the lower part of the 30S subunit head. Binds mRNA in the 70S ribosome, positioning it for translation. The polypeptide is Small ribosomal subunit protein uS3 (Chlamydia caviae (strain ATCC VR-813 / DSM 19441 / 03DC25 / GPIC) (Chlamydophila caviae)).